The primary structure comprises 101 residues: DET1- and DDB1-associated protein 1 (101 aa).

The disordered stretch occupies residues 67–101 (NAAKKRDQDQLEIGETSAPPRKIARTDSQEMNEDT).

Belongs to the DDA1 family. Component of numerous DCX (DDB1-CUL4-X-box) E3 ubiquitin-protein ligase complexes which consist of a core of DDB1, cullin-4 (CUL4A or CUL4B), DDA1 and RBX1.

It functions in the pathway protein modification; protein ubiquitination. In terms of biological role, functions as a component of numerous distinct DCX (DDB1-CUL4-X-box) E3 ubiquitin-protein ligase complexes which mediate the ubiquitination and subsequent proteasomal degradation of target proteins. In the DCX complexes, acts as a scaffolding subunit required to stabilize the complex. The protein is DET1- and DDB1-associated protein 1 of Xenopus laevis (African clawed frog).